A 345-amino-acid chain; its full sequence is Phosphoribosylformylglycinamidine cyclo-ligase (345 aa).

The protein belongs to the AIR synthase family.

The protein resides in the cytoplasm. It catalyses the reaction 2-formamido-N(1)-(5-O-phospho-beta-D-ribosyl)acetamidine + ATP = 5-amino-1-(5-phospho-beta-D-ribosyl)imidazole + ADP + phosphate + H(+). The protein operates within purine metabolism; IMP biosynthesis via de novo pathway; 5-amino-1-(5-phospho-D-ribosyl)imidazole from N(2)-formyl-N(1)-(5-phospho-D-ribosyl)glycinamide: step 2/2. The chain is Phosphoribosylformylglycinamidine cyclo-ligase from Limosilactobacillus reuteri (strain DSM 20016) (Lactobacillus reuteri).